Here is a 216-residue protein sequence, read N- to C-terminus: MGWIRGRRSRHSWEMSEFHNYNLDLAKNDFSTRWQKQRCPVIKSKCRENTSPLFFCCFIAVAMGIRFIVMVTIWSAVFLNSLFNQEVQIPLTGSYCGPCPKNWICYKNNCYQFFNESKNWYESQASCMSQNASLLKVYSKEDQDLLKLVKSYHWMGLIHIPTNGSWQWEDGSILSPNLLTIIEMQKGDCALYASSFKGYIENCSTPNTYICMQRTV.

At 1–51 the chain is on the cytoplasmic side; it reads MGWIRGRRSRHSWEMSEFHNYNLDLAKNDFSTRWQKQRCPVIKSKCRENTS. Residues 52 to 72 traverse the membrane as a helical; Signal-anchor for type II membrane protein segment; sequence PLFFCCFIAVAMGIRFIVMVT. Topologically, residues 73-216 are extracellular; it reads IWSAVFLNSL…NTYICMQRTV (144 aa). 2 disulfides stabilise this stretch: Cys-96–Cys-105 and Cys-99–Cys-110. Positions 98 to 213 constitute a C-type lectin domain; the sequence is PCPKNWICYK…STPNTYICMQ (116 aa). N-linked (GlcNAc...) asparagine glycosylation is found at Asn-115, Asn-131, Asn-163, and Asn-202. Cystine bridges form between Cys-127–Cys-211 and Cys-189–Cys-203.

As to quaternary structure, homodimer; disulfide-linked. Heterohexamer composed of two subunits of KLRK1 and four subunits of HCST/DAP10. Interacts (via transmembrane domain) with HCST/DAP10 (via transmembrane domain); the interaction is required for KLRK1 NK cell surface and induces NK cell-mediated cytotoxicity. Can form disulfide-bonded heterodimer with CD94. Interacts with CEACAM1; recruits PTPN6 that dephosphorylates VAV1.

The protein localises to the cell membrane. In terms of biological role, functions as an activating and costimulatory receptor involved in immunosurveillance upon binding to various cellular stress-inducible ligands displayed at the surface of autologous tumor cells and virus-infected cells. Provides both stimulatory and costimulatory innate immune responses on activated killer (NK) cells, leading to cytotoxic activity. Acts as a costimulatory receptor for T-cell receptor (TCR) in CD8(+) T-cell-mediated adaptive immune responses by amplifying T-cell activation. Stimulates perforin-mediated elimination of ligand-expressing tumor cells. Signaling involves calcium influx, culminating in the expression of TNF-alpha. Participates in NK cell-mediated bone marrow graft rejection. May play a regulatory role in differentiation and survival of NK cells. Binds to ligands belonging to various subfamilies of MHC class I-related glycoproteins. In Pongo pygmaeus (Bornean orangutan), this protein is NKG2-D type II integral membrane protein (KLRK1).